The primary structure comprises 233 residues: Orotidine 5'-phosphate decarboxylase (233 aa).

Residues Asp13, Lys35, 62–71 (DLKFHDIPNT), Thr122, Arg182, Gln191, Gly211, and Arg212 contribute to the substrate site. The active-site Proton donor is the Lys64.

It belongs to the OMP decarboxylase family. Type 1 subfamily. Homodimer.

It catalyses the reaction orotidine 5'-phosphate + H(+) = UMP + CO2. It functions in the pathway pyrimidine metabolism; UMP biosynthesis via de novo pathway; UMP from orotate: step 2/2. In terms of biological role, catalyzes the decarboxylation of orotidine 5'-monophosphate (OMP) to uridine 5'-monophosphate (UMP). This Pseudomonas putida (strain GB-1) protein is Orotidine 5'-phosphate decarboxylase.